The chain runs to 395 residues: Tyrosine--tRNA ligase (395 aa).

Positions 42-51 (PTAPDIHLGH) match the 'HIGH' region motif. The 'KMSKS' region motif lies at 226–230 (KMSKS). Residue lysine 229 coordinates ATP. Residues 334 to 394 (IGLANLLKEA…GKRKFARVTV (61 aa)) form the S4 RNA-binding domain.

This sequence belongs to the class-I aminoacyl-tRNA synthetase family. TyrS type 2 subfamily. In terms of assembly, homodimer.

It is found in the cytoplasm. It catalyses the reaction tRNA(Tyr) + L-tyrosine + ATP = L-tyrosyl-tRNA(Tyr) + AMP + diphosphate + H(+). Functionally, catalyzes the attachment of tyrosine to tRNA(Tyr) in a two-step reaction: tyrosine is first activated by ATP to form Tyr-AMP and then transferred to the acceptor end of tRNA(Tyr). The protein is Tyrosine--tRNA ligase of Mannheimia succiniciproducens (strain KCTC 0769BP / MBEL55E).